The primary structure comprises 182 residues: Large ribosomal subunit protein uL16 (182 aa).

It belongs to the universal ribosomal protein uL16 family.

The chain is Large ribosomal subunit protein uL16 from Pyrobaculum arsenaticum (strain DSM 13514 / JCM 11321 / PZ6).